We begin with the raw amino-acid sequence, 49 residues long: Putative metallothionein MT1DP (49 aa).

The segment at 1–29 (MDLSCSCATGGSCTCASSCKCKEYKCTSC) is beta. Residues Cys5, Cys7, Cys13, Cys15, Cys19, Cys21, Cys26, Cys29, Cys33, Cys34, Cys36, Cys37, Cys41, Cys44, and Cys48 each contribute to the a divalent metal cation site. Residues 30–49 (KKNCCSCCPMGCAKCAQGCT) form an alpha region.

The protein belongs to the metallothionein superfamily. Type 1 family.

Metallothioneins have a high content of cysteine residues that bind various heavy metals. In Homo sapiens (Human), this protein is Putative metallothionein MT1DP (MT1DP).